We begin with the raw amino-acid sequence, 82 residues long: Colonization factor (82 aa).

The first 33 residues, 1–33, serve as a signal peptide directing secretion; that stretch reads MFSSLKNKLNTFKSTLSLGVFLLFSAFANQALA.

It localises to the secreted. This Vibrio cholerae serotype O1 (strain ATCC 39315 / El Tor Inaba N16961) protein is Colonization factor (cep).